A 979-amino-acid polypeptide reads, in one-letter code: UPF0182 protein MT0070 (979 aa).

7 helical membrane passes run 19–41, 63–85, 114–136, 174–196, 208–230, 261–280, and 285–307; these read LVTAGMGMLALLLFGPRLVDIYV, LAIVAAVALVVAGIVLAALLLAY, LFGWGIAVTLGVVCGLIASFDWV, WLFVAVVLAFLASLLTHYLFGGL, AARVQLAVFAGAVVLLKAVAYWL, LVLVAIAVLCAVSFFTAIFL, and IPAMAAALLVLSAILVGGLWPLL. The segment at 894-948 is disordered; the sequence is VFGPGTGRVATXPGGDAASAPPPGAGGPAPPQGVPPPRTTQPPAAPPRGPDVPPA. The segment covering 913–946 has biased composition (pro residues); that stretch reads APPPGAGGPAPPQGVPPPRTTQPPAAPPRGPDVP.

The protein belongs to the UPF0182 family.

The protein localises to the cell membrane. This chain is UPF0182 protein MT0070, found in Mycobacterium tuberculosis (strain CDC 1551 / Oshkosh).